The following is an 83-amino-acid chain: Cytotoxin homolog 5 (83 aa).

A signal peptide spans 1-21 (MKTLLLTMVVVTIVCLDLGYT). 4 disulfides stabilise this stretch: Cys24–Cys43, Cys36–Cys61, Cys65–Cys76, and Cys77–Cys82.

Belongs to the three-finger toxin family. Short-chain subfamily. Orphan group XV sub-subfamily. Expressed by the venom gland.

Its subcellular location is the secreted. It is found in the target cell membrane. Has low cytotoxic activity. The protein is Cytotoxin homolog 5 of Naja atra (Chinese cobra).